We begin with the raw amino-acid sequence, 478 residues long: Glutamate-1-semialdehyde 2,1-aminomutase, chloroplastic (478 aa).

The N-terminal 40 residues, 1–40, are a transit peptide targeting the chloroplast; sequence MAGAAAASAAAAAVASGISARPVAPRPSPSRARAPRSVVR. Residues 15 to 36 form a disordered region; that stretch reads ASGISARPVAPRPSPSRARAPR. Lysine 318 carries the N6-(pyridoxal phosphate)lysine modification.

This sequence belongs to the class-III pyridoxal-phosphate-dependent aminotransferase family. HemL subfamily. As to quaternary structure, homodimer. The cofactor is pyridoxal 5'-phosphate.

Its subcellular location is the plastid. It localises to the chloroplast. The enzyme catalyses (S)-4-amino-5-oxopentanoate = 5-aminolevulinate. The protein operates within porphyrin-containing compound metabolism; protoporphyrin-IX biosynthesis; 5-aminolevulinate from L-glutamyl-tRNA(Glu): step 2/2. It functions in the pathway porphyrin-containing compound metabolism; chlorophyll biosynthesis. The sequence is that of Glutamate-1-semialdehyde 2,1-aminomutase, chloroplastic (GSA) from Oryza sativa subsp. japonica (Rice).